We begin with the raw amino-acid sequence, 413 residues long: Na(+)-translocating NADH-quinone reductase subunit B (413 aa).

A run of 3 helical transmembrane segments spans residues 56-76 (MMILVWFAVFPAMFWGMYNVG), 123-143 (LLGAAYFLPIYAVVFLVGGFW), and 169-189 (IVPPTLPLWQAALGISFGVVI). Thr236 is modified (FMN phosphoryl threonine). Helical transmembrane passes span 270–290 (GSIGEVSTLMILIGGAIIIFG), 297–317 (IVAGVMIGMIATAYLFNWIGS), 322–342 (LFAMPWYWHLVLGGFAFGMIF), 358–378 (WWYGGLIGVMCILIRVANPAY), and 381–401 (GMMLAILFANLFAPLFDYVVV).

This sequence belongs to the NqrB/RnfD family. In terms of assembly, composed of six subunits; NqrA, NqrB, NqrC, NqrD, NqrE and NqrF. FMN serves as cofactor.

It localises to the cell inner membrane. The enzyme catalyses a ubiquinone + n Na(+)(in) + NADH + H(+) = a ubiquinol + n Na(+)(out) + NAD(+). Its function is as follows. NQR complex catalyzes the reduction of ubiquinone-1 to ubiquinol by two successive reactions, coupled with the transport of Na(+) ions from the cytoplasm to the periplasm. NqrA to NqrE are probably involved in the second step, the conversion of ubisemiquinone to ubiquinol. The protein is Na(+)-translocating NADH-quinone reductase subunit B of Yersinia pestis.